The following is a 481-amino-acid chain: Tripartite motif-containing protein 10 (481 aa).

An RING-type zinc finger spans residues Cys-16–Lys-61. A B box-type zinc finger spans residues Gly-94–Leu-135. The Zn(2+) site is built by Cys-99, His-102, Cys-121, and His-127. Residues Tyr-142 to Gln-177 are a coiled coil. Residues Arg-292–Ser-481 form the B30.2/SPRY domain.

It belongs to the TRIM/RBCC family. Interacts with IFNAR1; this interaction prevents association of IFNAR1 with TYK2.

The protein resides in the cytoplasm. Its function is as follows. E3 ligase that plays an essential role in the differentiation and survival of terminal erythroid cells. May directly bind to PTEN and promote its ubiquitination, resulting in its proteasomal degradation and activation of hypertrophic signaling. In addition, plays a role in immune response regulation by repressing the phosphorylation of STAT1 and STAT2 in the interferon/JAK/STAT signaling pathway independent of its E3 ligase activity. Mechanistically, interacts with the intracellular domain of IFNAR1 and thereby inhibits the association of TYK2 and IFNAR1. This chain is Tripartite motif-containing protein 10 (TRIM10), found in Pan troglodytes (Chimpanzee).